Here is a 477-residue protein sequence, read N- to C-terminus: Cytochrome P450 716A1 (477 aa).

Residues 2–22 form a helical membrane-spanning segment; sequence YMAIMIILFLSSILLSLLLLL. A heme-binding site is contributed by cysteine 424.

Belongs to the cytochrome P450 family. It depends on heme as a cofactor.

It localises to the membrane. In terms of biological role, possesses triterpene oxidizing activity. Catalyzes the C28 hydroxylation of alpha-amyrin, beta-amyrin, and lupeol, producing uvaol, erythrodiol, and betulin, respectively. Catalyzes the C28 carboxylation of alpha- and beta-amyrin. The sequence is that of Cytochrome P450 716A1 from Arabidopsis thaliana (Mouse-ear cress).